Here is a 151-residue protein sequence, read N- to C-terminus: Small ribosomal subunit protein uS11 (151 aa).

Belongs to the universal ribosomal protein uS11 family.

The chain is Small ribosomal subunit protein uS11 (RPS14) from Podocoryna carnea (Hydrozoan).